Here is a 544-residue protein sequence, read N- to C-terminus: Chaperonin GroEL (544 aa).

Residues 30-33 (TLGP), Lys51, 87-91 (DGTTT), Gly415, and Asp496 contribute to the ATP site.

It belongs to the chaperonin (HSP60) family. Forms a cylinder of 14 subunits composed of two heptameric rings stacked back-to-back. Interacts with the co-chaperonin GroES.

The protein localises to the cytoplasm. It catalyses the reaction ATP + H2O + a folded polypeptide = ADP + phosphate + an unfolded polypeptide.. Its function is as follows. Together with its co-chaperonin GroES, plays an essential role in assisting protein folding. The GroEL-GroES system forms a nano-cage that allows encapsulation of the non-native substrate proteins and provides a physical environment optimized to promote and accelerate protein folding. In Granulibacter bethesdensis (strain ATCC BAA-1260 / CGDNIH1), this protein is Chaperonin GroEL.